The following is a 372-amino-acid chain: Oxysterol-binding protein 3 (372 aa).

The segment covering 1–10 (MGKSDRKLTE) has biased composition (basic and acidic residues). The tract at residues 1 to 25 (MGKSDRKLTEENSIENGVKPGKLTE) is disordered.

It belongs to the OSBP family.

The protein is Oxysterol-binding protein 3 (osbC) of Dictyostelium discoideum (Social amoeba).